Consider the following 197-residue polypeptide: Ras-like protein rasB (197 aa).

Position 13 to 20 (13 to 20 (GGGGVGKS)) interacts with GTP. The short motif at 35–43 (YDPTIEDSY) is the Effector region element. GTP-binding positions include 60 to 64 (DTAGQ) and 119 to 122 (NKCD). Cysteine 194 is subject to Cysteine methyl ester. Cysteine 194 carries the S-geranylgeranyl cysteine lipid modification. Residues 195–197 (LIL) constitute a propeptide, removed in mature form.

It belongs to the small GTPase superfamily. Ras family.

The protein localises to the cell membrane. It carries out the reaction GTP + H2O = GDP + phosphate + H(+). Its activity is regulated as follows. Alternates between an inactive form bound to GDP and an active form bound to GTP. Activated by a guanine nucleotide-exchange factor (GEF) and inactivated by a GTPase-activating protein (GAP). In terms of biological role, ras proteins bind GDP/GTP and possess intrinsic GTPase activity. The sequence is that of Ras-like protein rasB (rasB) from Dictyostelium discoideum (Social amoeba).